The chain runs to 1120 residues: Terminal uridylyltransferase 1 (1120 aa).

Disordered regions lie at residues 1–156 (MSKY…SAVE) and 196–221 (AALI…PHTP). Residues 7-16 (LFNQGTKDGT) show a composition bias toward polar residues. Residues 17–59 (NASSGSEANSANITSSSAPASSTNTSSPTSSESAVVSPPASTS) show a composition bias toward low complexity. Residues 60–70 (PRRRLIHRRHG) show a composition bias toward basic residues. Basic and acidic residues predominate over residues 90–103 (NEEKHENFISDSVH). The segment covering 118–128 (LTTSGSETVMS) has biased composition (polar residues). Composition is skewed to low complexity over residues 134 to 154 (AFEA…STSA) and 207 to 217 (SSAVSSSSSGS). The C2H2-type; atypical zinc finger occupies 222 to 253 (PRLFTCDMCLQYVSTSYEALEQHALDQHGDAL). Positions 227, 230, 244, and 249 each coordinate Zn(2+). Residues serine 330 and 341 to 344 (SDID) contribute to the UTP site. 2 residues coordinate Mg(2+): aspartate 342 and aspartate 344. Arginine 390 serves as a coordination point for RNA. Aspartate 548 lines the Mg(2+) pocket. Residues 555-559 (GIRNS), lysine 580, lysine 584, and 598-599 (SY) contribute to the UTP site. The PAP-associated domain maps to 659 to 697 (GELLLGFFYYYAFEFDWVNHVVSLNRPGITTKASLGWDV). An important for catalytic activity and RNA binding region spans residues 750–1120 (GMMASSASAA…ARRVLRLLFR (371 aa)). The Nucleotide recognition motif (NRM) motif lies at 773–782 (IEDPYEENLN). The interval 800–900 (YRGLLSLLKD…LLSDLEAAFL (101 aa)) is involved in oligomerization. A disordered region spans residues 1047-1076 (PSTTTQGEDPLASGTCEQGGVSPSLPTGAP).

This sequence belongs to the DNA polymerase type-B-like family. Homotetramer. Part of a 700kDa complex. Interacts with p45 and p50 RNA ligases. Mg(2+) is required as a cofactor. It depends on Mn(2+) as a cofactor.

It is found in the mitochondrion. It catalyses the reaction RNA(n) + UTP = RNA(n)-3'-uridine ribonucleotide + diphosphate. Its activity is regulated as follows. Zinc-binding is required for catalytic activity. Its function is as follows. Terminal uridylyltransferase which is involved in the post-transcriptional editing of mitochondrial RNA, a process involving the addition and deletion of uridine (U) nucleotides in the pre-mRNA. Specifically, catalyzes the addition of Us to the 3'-hydroxyl group of guided RNA (gRNA), with a preference for RNAs terminating in 6 Us, but also can add Us to RNAs terminating in 6 adenines (A), 6 cytosines (C), or 6 guanines (G). Can mediate RNA-independent UTP polymerization in vitro. Can mediate pyrophosphate-dependent degradation of synthetic RNA ending with U residues in vitro. In Leishmania tarentolae (Sauroleishmania tarentolae), this protein is Terminal uridylyltransferase 1.